Reading from the N-terminus, the 85-residue chain is Large ribosomal subunit protein bL27 (85 aa).

Positions 1 to 22 are disordered; it reads MAHKKGASSTRNGRDSNAQRLG. Residues 7–19 are compositionally biased toward polar residues; that stretch reads ASSTRNGRDSNAQ.

Belongs to the bacterial ribosomal protein bL27 family.

The protein is Large ribosomal subunit protein bL27 of Leifsonia xyli subsp. xyli (strain CTCB07).